Consider the following 37-residue polypeptide: Large ribosomal subunit protein bL36 (37 aa).

It belongs to the bacterial ribosomal protein bL36 family.

The sequence is that of Large ribosomal subunit protein bL36 from Synechococcus sp. (strain CC9605).